Here is a 95-residue protein sequence, read N- to C-terminus: Large ribosomal subunit protein bL31 (95 aa).

A disordered region spans residues 68 to 95 (AGLNNINKKPEKKKIQGKSEPRKSLNEL). Residues 80 to 95 (KKIQGKSEPRKSLNEL) are compositionally biased toward basic and acidic residues.

The protein belongs to the bacterial ribosomal protein bL31 family. Type A subfamily. Part of the 50S ribosomal subunit.

Functionally, binds the 23S rRNA. The sequence is that of Large ribosomal subunit protein bL31 from Ureaplasma parvum serovar 3 (strain ATCC 700970).